The chain runs to 815 residues: (E)-gamma-bisabolene synthase (815 aa).

Positions 561, 565, 709, and 717 each coordinate Mg(2+). The DDXXD motif signature appears at 561–565 (DDMYD).

The protein belongs to the terpene synthase family. Tpsd subfamily. Mg(2+) is required as a cofactor. Requires Mn(2+) as cofactor.

The protein localises to the cytoplasm. It carries out the reaction (2E,6E)-farnesyl diphosphate = (E)-gamma-bisabolene + diphosphate. It functions in the pathway terpene metabolism; oleoresin biosynthesis. Functionally, involved in defensive oleoresin formation in conifers in response to insect attack or other injury. Involved in sesquiterpene (C15) olefins biosynthesis. Produces mainly (E)-gamma-bisabolene when used with farnesyl diphosphate as substrate. No activity with geranyl diphosphate or geranylgeranyl diphosphate. In Pseudotsuga menziesii (Douglas-fir), this protein is (E)-gamma-bisabolene synthase (TPS3).